A 370-amino-acid polypeptide reads, in one-letter code: Histidinol-phosphate aminotransferase (370 aa).

An N6-(pyridoxal phosphate)lysine modification is found at K220.

It belongs to the class-II pyridoxal-phosphate-dependent aminotransferase family. Histidinol-phosphate aminotransferase subfamily. In terms of assembly, homodimer. Pyridoxal 5'-phosphate serves as cofactor.

It catalyses the reaction L-histidinol phosphate + 2-oxoglutarate = 3-(imidazol-4-yl)-2-oxopropyl phosphate + L-glutamate. It participates in amino-acid biosynthesis; L-histidine biosynthesis; L-histidine from 5-phospho-alpha-D-ribose 1-diphosphate: step 7/9. The chain is Histidinol-phosphate aminotransferase from Granulibacter bethesdensis (strain ATCC BAA-1260 / CGDNIH1).